A 463-amino-acid polypeptide reads, in one-letter code: L-seryl-tRNA(Sec) selenium transferase (463 aa).

At lysine 295 the chain carries N6-(pyridoxal phosphate)lysine.

Belongs to the SelA family. In terms of assembly, homodecamer; pentamer of dimers. Binds only one seryl-tRNA(Sec) per dimer. It depends on pyridoxal 5'-phosphate as a cofactor.

It localises to the cytoplasm. The enzyme catalyses L-seryl-tRNA(Sec) + selenophosphate + H(+) = L-selenocysteinyl-tRNA(Sec) + phosphate. Its pathway is aminoacyl-tRNA biosynthesis; selenocysteinyl-tRNA(Sec) biosynthesis; selenocysteinyl-tRNA(Sec) from L-seryl-tRNA(Sec) (bacterial route): step 1/1. Functionally, converts seryl-tRNA(Sec) to selenocysteinyl-tRNA(Sec) required for selenoprotein biosynthesis. The sequence is that of L-seryl-tRNA(Sec) selenium transferase from Shigella flexneri serotype 5b (strain 8401).